Reading from the N-terminus, the 280-residue chain is Retinoschisin (280 aa).

An N-terminal signal peptide occupies residues 1–23; the sequence is MHLPREAFLLALAGAFIFPSSQQ. One can recognise an F5/8 type C domain in the interval 119-275; that stretch reads CPYHRPLGFE…IALRLELLLC (157 aa). Disulfide bonds link Cys119-Cys275 and Cys166-Cys198.

Homooctamer of 4 homodimers; disulfide-linked. The homooctamer has a flat, cogwheel structure with a diameter of about 14 nm. Two stacked octamers can assemble to form a hexadecamer.

It localises to the secreted. Its subcellular location is the cell membrane. Its function is as follows. Binds negatively charged membrane lipids, such as phosphatidylserine and phosphoinositides. May play a role in cell-cell adhesion processes in the retina, via homomeric interaction between octamers present on the surface of two neighboring cells. Required for normal structure and function of the retina. The polypeptide is Retinoschisin (xlrs1) (Takifugu rubripes (Japanese pufferfish)).